A 186-amino-acid polypeptide reads, in one-letter code: Probable chorismate pyruvate-lyase (186 aa).

Substrate contacts are provided by Arg77, Leu115, and Glu174.

The protein belongs to the UbiC family.

Its subcellular location is the cytoplasm. It catalyses the reaction chorismate = 4-hydroxybenzoate + pyruvate. The protein operates within cofactor biosynthesis; ubiquinone biosynthesis. Functionally, removes the pyruvyl group from chorismate, with concomitant aromatization of the ring, to provide 4-hydroxybenzoate (4HB) for the ubiquinone pathway. This is Probable chorismate pyruvate-lyase from Shewanella sp. (strain W3-18-1).